The following is a 329-amino-acid chain: GTP 3',8-cyclase 1 (329 aa).

A Radical SAM core domain is found at 7–230 (GQGRQIDYLR…LDSAEQSGGP (224 aa)). Position 16 (Arg16) interacts with GTP. Positions 23 and 27 each coordinate [4Fe-4S] cluster. Tyr29 serves as a coordination point for S-adenosyl-L-methionine. Cys30 contacts [4Fe-4S] cluster. Arg65 lines the GTP pocket. Gly69 is a binding site for S-adenosyl-L-methionine. Thr96 contributes to the GTP binding site. S-adenosyl-L-methionine is bound at residue Ser120. Lys157 lines the GTP pocket. Met191 provides a ligand contact to S-adenosyl-L-methionine. [4Fe-4S] cluster-binding residues include Cys255 and Cys258. Position 260 to 262 (260 to 262 (RLR)) interacts with GTP. Cys272 contacts [4Fe-4S] cluster.

It belongs to the radical SAM superfamily. MoaA family. As to quaternary structure, monomer and homodimer. Requires [4Fe-4S] cluster as cofactor.

The enzyme catalyses GTP + AH2 + S-adenosyl-L-methionine = (8S)-3',8-cyclo-7,8-dihydroguanosine 5'-triphosphate + 5'-deoxyadenosine + L-methionine + A + H(+). It participates in cofactor biosynthesis; molybdopterin biosynthesis. In terms of biological role, catalyzes the cyclization of GTP to (8S)-3',8-cyclo-7,8-dihydroguanosine 5'-triphosphate. The chain is GTP 3',8-cyclase 1 (moaA1) from Pseudomonas aeruginosa (strain ATCC 15692 / DSM 22644 / CIP 104116 / JCM 14847 / LMG 12228 / 1C / PRS 101 / PAO1).